The chain runs to 364 residues: Aminomethyltransferase (364 aa).

This sequence belongs to the GcvT family. As to quaternary structure, the glycine cleavage system is composed of four proteins: P, T, L and H.

The enzyme catalyses N(6)-[(R)-S(8)-aminomethyldihydrolipoyl]-L-lysyl-[protein] + (6S)-5,6,7,8-tetrahydrofolate = N(6)-[(R)-dihydrolipoyl]-L-lysyl-[protein] + (6R)-5,10-methylene-5,6,7,8-tetrahydrofolate + NH4(+). Functionally, the glycine cleavage system catalyzes the degradation of glycine. This Shewanella putrefaciens (strain CN-32 / ATCC BAA-453) protein is Aminomethyltransferase.